Reading from the N-terminus, the 268-residue chain is Tryptophan synthase alpha chain (268 aa).

Residues glutamate 49 and aspartate 60 each act as proton acceptor in the active site.

This sequence belongs to the TrpA family. As to quaternary structure, tetramer of two alpha and two beta chains.

It catalyses the reaction (1S,2R)-1-C-(indol-3-yl)glycerol 3-phosphate + L-serine = D-glyceraldehyde 3-phosphate + L-tryptophan + H2O. It participates in amino-acid biosynthesis; L-tryptophan biosynthesis; L-tryptophan from chorismate: step 5/5. The alpha subunit is responsible for the aldol cleavage of indoleglycerol phosphate to indole and glyceraldehyde 3-phosphate. In Haemophilus influenzae (strain PittGG), this protein is Tryptophan synthase alpha chain.